The chain runs to 219 residues: Adenylate kinase (219 aa).

ATP is bound at residue 10–15 (GAGKGT). The tract at residues 30-59 (ATGDLFRANISQGTDLGKQARAYMDAGQLV) is NMP. AMP is bound by residues Thr31, Arg36, 57 to 59 (QLV), 85 to 88 (GFPR), and Gln92. The tract at residues 126 to 164 (GRRVCRNNSAHVFHLTYNPPKAEGVCDACGGELYQRDDD) is LID. ATP is bound by residues Arg127 and 137–138 (VF). Residues Arg161 and Arg172 each contribute to the AMP site. Residue Gly200 participates in ATP binding.

Belongs to the adenylate kinase family. Monomer.

The protein localises to the cytoplasm. The enzyme catalyses AMP + ATP = 2 ADP. The protein operates within purine metabolism; AMP biosynthesis via salvage pathway; AMP from ADP: step 1/1. Catalyzes the reversible transfer of the terminal phosphate group between ATP and AMP. Plays an important role in cellular energy homeostasis and in adenine nucleotide metabolism. In Streptomyces griseus subsp. griseus (strain JCM 4626 / CBS 651.72 / NBRC 13350 / KCC S-0626 / ISP 5235), this protein is Adenylate kinase.